Here is a 178-residue protein sequence, read N- to C-terminus: MKIALSGKSGCGNTTVSSMIAKHYGLEFINYTFHDIARERNIPFSEFYEKEIIGRDDYYWDRYLDKRLFALSKKNNTVLASRLAIWISKSADLKIYLYAKMEVRAERIMTREGGMYSDVLSSTFNRDENDKKRYLAIYNIDIDDYSSETDLVIDVTNINSNEVFELIRDEIDKRNLKN.

An ATP-binding site is contributed by 7 to 15; sequence GKSGCGNTT.

Belongs to the cytidylate kinase family. Type 2 subfamily.

The protein localises to the cytoplasm. It catalyses the reaction CMP + ATP = CDP + ADP. The catalysed reaction is dCMP + ATP = dCDP + ADP. The protein is Cytidylate kinase 2 of Borreliella afzelii (strain PKo) (Borrelia afzelii).